The chain runs to 727 residues: Fatty acid oxidation complex subunit alpha (727 aa).

The tract at residues 16-205 (NQTASVFSFD…RLGLVDDAVP (190 aa)) is enoyl-CoA hydratase. The 3-hydroxyacyl-CoA dehydrogenase stretch occupies residues 321 to 727 (AKIKHVGILG…MAEQNKSFYP (407 aa)).

The protein in the N-terminal section; belongs to the enoyl-CoA hydratase/isomerase family. It in the central section; belongs to the 3-hydroxyacyl-CoA dehydrogenase family. Heterotetramer of two alpha chains (FadJ) and two beta chains (FadI).

Its subcellular location is the cytoplasm. It carries out the reaction a (3S)-3-hydroxyacyl-CoA = a (2E)-enoyl-CoA + H2O. The enzyme catalyses a 4-saturated-(3S)-3-hydroxyacyl-CoA = a (3E)-enoyl-CoA + H2O. The catalysed reaction is a (3S)-3-hydroxyacyl-CoA + NAD(+) = a 3-oxoacyl-CoA + NADH + H(+). It catalyses the reaction (3S)-3-hydroxybutanoyl-CoA = (3R)-3-hydroxybutanoyl-CoA. It functions in the pathway lipid metabolism; fatty acid beta-oxidation. Catalyzes the formation of a hydroxyacyl-CoA by addition of water on enoyl-CoA. Also exhibits 3-hydroxyacyl-CoA epimerase and 3-hydroxyacyl-CoA dehydrogenase activities. The polypeptide is Fatty acid oxidation complex subunit alpha (Photorhabdus laumondii subsp. laumondii (strain DSM 15139 / CIP 105565 / TT01) (Photorhabdus luminescens subsp. laumondii)).